Reading from the N-terminus, the 516-residue chain is D-aminopeptidase (516 aa).

The active-site Nucleophile is the serine 61. Catalysis depends on lysine 64, which acts as the Proton donor/acceptor. Residues 476–486 (RRSMDAPAPGD) are important for specificity. Aspartate 480 is a binding site for substrate.

It belongs to the peptidase S12 family. In terms of assembly, homodimer.

The enzyme catalyses Release of an N-terminal D-amino acid from a peptide, Xaa-|-Yaa-, in which Xaa is preferably D-Ala, D-Ser or D-Thr. D-amino acid amides and methyl esters also are hydrolyzed, as is glycine amide.. Inhibited by beta-lactam compounds such as 6-aminopenicillic acid, 7-aminocephalosporanic acid, benzylpenicillin and ampicillin. Inhibited by p-chloromercuribenzoate. Functionally, hydrolyzes N-terminal residues in D-amino acid-containing peptides. The chain is D-aminopeptidase from Cereibacter sphaeroides (strain ATCC 17029 / ATH 2.4.9) (Rhodobacter sphaeroides).